We begin with the raw amino-acid sequence, 111 residues long: Small ribosomal subunit protein bS16 (111 aa).

Positions 92-111 (EKGVKESNEIVEPEGEEVKE) are disordered. A compositionally biased stretch (acidic residues) spans 100-111 (EIVEPEGEEVKE).

It belongs to the bacterial ribosomal protein bS16 family.

This chain is Small ribosomal subunit protein bS16, found in Petrotoga mobilis (strain DSM 10674 / SJ95).